Here is a 2191-residue protein sequence, read N- to C-terminus: Genome polyprotein (2191 aa).

Glycine 2 carries N-myristoyl glycine; by host lipidation. Over 2–1501 the chain is Cytoplasmic; the sequence is GAQVSTQKTG…HVSRAFICLQ (1500 aa). Residues 566–582 form an amphipathic alpha-helix region; the sequence is FYQNDVQNAVERSIVRV. Active-site for protease 2A activity residues include histidine 878 and aspartate 896. Cysteine 913 and cysteine 915 together coordinate Zn(2+). Cysteine 967 serves as the catalytic For protease 2A activity. Zn(2+) is bound by residues cysteine 973 and histidine 975. Residues 1107–1179 are membrane-binding; the sequence is NNGWLKKFTE…EQSAPSQSDQ (73 aa). The tract at residues 1107–1245 is oligomerization; that stretch reads NNGWLKKFTE…SPGVGKSVAT (139 aa). Residues 1128-1132 form an RNA-binding region; it reads AIKIQ. Positions 1211–1367 constitute an SF3 helicase domain; the sequence is EKKMSNYIQF…SMYNQNGKIN (157 aa). 3 residues coordinate Zn(2+): cysteine 1375, cysteine 1387, and cysteine 1392. The C4-type; degenerate zinc-finger motif lies at 1375-1392; it reads CDEECCPVNFKKCCPLVC. The tract at residues 1419–1426 is RNA-binding; it reads EYNHRHSV. The segment at 1430-1435 is oligomerization; sequence LEALFQ. An intramembrane segment occupies 1502-1517; it reads ALTTFVSVAGIIYIIY. The Cytoplasmic segment spans residues 1518 to 2191; the sequence is KLFAGFQGAY…TLRRKWLDSF (674 aa). The residue at position 1527 (tyrosine 1527) is an O-(5'-phospho-RNA)-tyrosine. A Peptidase C3 domain is found at 1547–1725; that stretch reads GPAFEFAVAM…FSAALLKHYF (179 aa). Catalysis depends on for protease 3C activity residues histidine 1586, glutamate 1617, and cysteine 1693. The 117-residue stretch at 1956–2072 folds into the RdRp catalytic domain; it reads GHLIAFDYSG…SYPWPIDASL (117 aa). Residues aspartate 1962 and aspartate 2058 each contribute to the Mg(2+) site.

This sequence belongs to the picornaviruses polyprotein family. In terms of assembly, interacts with capsid protein VP1 and capsid protein VP3 to form heterotrimeric protomers. As to quaternary structure, interacts with capsid protein VP0, and capsid protein VP3 to form heterotrimeric protomers. Five protomers subsequently associate to form pentamers which serve as building blocks for the capsid. Interacts with capsid protein VP2, capsid protein VP3 and capsid protein VP4 following cleavage of capsid protein VP0. Interacts with host CD55 and FCGRT; these interactions promote virus attachment to the host cell and subsequent internalization. Interacts with capsid protein VP1 and capsid protein VP3 in the mature capsid. Interacts with host CD55 and FCGRT; these interactions promote virus attachment to the host cell and subsequent internalization. In terms of assembly, interacts with capsid protein VP0 and capsid protein VP1 to form heterotrimeric protomers. Five protomers subsequently associate to form pentamers which serve as building blocks for the capsid. Interacts with capsid protein VP4 in the mature capsid. Interacts with protein 2C; this interaction may be important for virion morphogenesis. Interacts with host FCGRT; this interaction promotes virus attachment to the host cell and subsequent internalization. As to quaternary structure, interacts with capsid protein VP1 and capsid protein VP3. Homodimer. In terms of assembly, homohexamer; forms a hexameric ring structure with 6-fold symmetry characteristic of AAA+ ATPases. Interacts (via N-terminus) with host RTN3 (via reticulon domain); this interaction is important for viral replication. Interacts with capsid protein VP3; this interaction may be important for virion morphogenesis. As to quaternary structure, interacts with protein 3CD. Homodimer. Interacts with host GBF1. Interacts (via GOLD domain) with host ACBD3 (via GOLD domain); this interaction allows the formation of a viral protein 3A/ACBD3 heterotetramer with a 2:2 stoichiometry, which will stimulate the recruitment of host PI4KB in order to synthesize PI4P at the viral RNA replication sites. In terms of assembly, interacts with RNA-directed RNA polymerase. As to quaternary structure, interacts with protein 3AB and with RNA-directed RNA polymerase. Interacts with Viral protein genome-linked and with protein 3CD. Mg(2+) is required as a cofactor. Post-translationally, specific enzymatic cleavages in vivo by the viral proteases yield processing intermediates and the mature proteins. Myristoylation is required for the formation of pentamers during virus assembly. Further assembly of 12 pentamers and a molecule of genomic RNA generates the provirion. In terms of processing, during virion maturation, immature virions are rendered infectious following cleavage of VP0 into VP4 and VP2. This maturation seems to be an autocatalytic event triggered by the presence of RNA in the capsid and it is followed by a conformational change infectious virion. Post-translationally, myristoylation is required during RNA encapsidation and formation of the mature virus particle. VPg is uridylylated by the polymerase into VPg-pUpU. This acts as a nucleotide-peptide primer for the genomic RNA replication.

Its subcellular location is the virion. It is found in the host cytoplasm. It localises to the host cytoplasmic vesicle membrane. The protein localises to the host nucleus. It carries out the reaction a ribonucleoside 5'-triphosphate + H2O = a ribonucleoside 5'-diphosphate + phosphate + H(+). The catalysed reaction is Selective cleavage of Tyr-|-Gly bond in the picornavirus polyprotein.. The enzyme catalyses RNA(n) + a ribonucleoside 5'-triphosphate = RNA(n+1) + diphosphate. It catalyses the reaction Selective cleavage of Gln-|-Gly bond in the poliovirus polyprotein. In other picornavirus reactions Glu may be substituted for Gln, and Ser or Thr for Gly.. Its activity is regulated as follows. Replication or transcription is subject to high level of random mutations by the nucleotide analog ribavirin. Functionally, forms an icosahedral capsid of pseudo T=3 symmetry with capsid proteins VP2 and VP3. The capsid is 300 Angstroms in diameter, composed of 60 copies of each capsid protein and enclosing the viral positive strand RNA genome. Capsid protein VP1 mainly forms the vertices of the capsid. Capsid protein VP1 interacts with host cell receptor to provide virion attachment to target host cells. This attachment induces virion internalization. Tyrosine kinases are probably involved in the entry process. After binding to its receptor, the capsid undergoes conformational changes. Capsid protein VP1 N-terminus (that contains an amphipathic alpha-helix) and capsid protein VP4 are externalized. Together, they shape a pore in the host membrane through which viral genome is translocated to host cell cytoplasm. Its function is as follows. Forms an icosahedral capsid of pseudo T=3 symmetry with capsid proteins VP2 and VP3. The capsid is 300 Angstroms in diameter, composed of 60 copies of each capsid protein and enclosing the viral positive strand RNA genome. In terms of biological role, lies on the inner surface of the capsid shell. After binding to the host receptor, the capsid undergoes conformational changes. Capsid protein VP4 is released, Capsid protein VP1 N-terminus is externalized, and together, they shape a pore in the host membrane through which the viral genome is translocated into the host cell cytoplasm. Component of immature procapsids, which is cleaved into capsid proteins VP4 and VP2 after maturation. Allows the capsid to remain inactive before the maturation step. Functionally, cysteine protease that cleaves viral polyprotein and specific host proteins. It is responsible for the autocatalytic cleavage between the P1 and P2 regions, which is the first cleavage occurring in the polyprotein. Also cleaves the host translation initiation factor EIF4G1, in order to shut down the capped cellular mRNA translation. Inhibits the host nucleus-cytoplasm protein and RNA trafficking by cleaving host members of the nuclear pores. Counteracts stress granule formation probably by antagonizing its assembly or promoting its dissassembly. Its function is as follows. Plays an essential role in the virus replication cycle by acting as a viroporin. Creates a pore in the host endoplasmic reticulum and as a consequence releases Ca2+ in the cytoplasm of infected cell. In turn, high levels of cytoplasmic calcium may trigger membrane trafficking and transport of viral ER-associated proteins to viroplasms, sites of viral genome replication. In terms of biological role, induces and associates with structural rearrangements of intracellular membranes. Displays RNA-binding, nucleotide binding and NTPase activities. May play a role in virion morphogenesis and viral RNA encapsidation by interacting with the capsid protein VP3. Localizes the viral replication complex to the surface of membranous vesicles. Together with protein 3CD binds the Cis-Active RNA Element (CRE) which is involved in RNA synthesis initiation. Acts as a cofactor to stimulate the activity of 3D polymerase, maybe through a nucleid acid chaperone activity. Functionally, localizes the viral replication complex to the surface of membranous vesicles. It inhibits host cell endoplasmic reticulum-to-Golgi apparatus transport and causes the disassembly of the Golgi complex, possibly through GBF1 interaction. This would result in depletion of MHC, trail receptors and IFN receptors at the host cell surface. Plays an essential role in viral RNA replication by recruiting ACBD3 and PI4KB at the viral replication sites, thereby allowing the formation of the rearranged membranous structures where viral replication takes place. Its function is as follows. Acts as a primer for viral RNA replication and remains covalently bound to viral genomic RNA. VPg is uridylylated prior to priming replication into VPg-pUpU. The oriI viral genomic sequence may act as a template for this. The VPg-pUpU is then used as primer on the genomic RNA poly(A) by the RNA-dependent RNA polymerase to replicate the viral genome. During genome replication, the VPg-RNA linkage is removed by the host TDP2, thereby accelerating replication. During the late stage of the replication cycle, host TDP2 is excluded from sites of viral RNA synthesis and encapsidation, allowing for the generation of progeny virions. In terms of biological role, involved in the viral replication complex and viral polypeptide maturation. It exhibits protease activity with a specificity and catalytic efficiency that is different from protease 3C. Protein 3CD binds to the 5'UTR of the viral genome. Replicates the viral genomic RNA on the surface of intracellular membranes. May form linear arrays of subunits that propagate along a strong head-to-tail interaction called interface-I. Covalently attaches UMP to a tyrosine of VPg, which is used to prime RNA synthesis. The positive stranded RNA genome is first replicated at virus induced membranous vesicles, creating a dsRNA genomic replication form. This dsRNA is then used as template to synthesize positive stranded RNA genomes. ss(+)RNA genomes are either translated, replicated or encapsidated. Functionally, major viral protease that mediates proteolytic processing of the polyprotein. Cleaves host EIF5B, contributing to host translation shutoff. Also cleaves host PABPC1, contributing to host translation shutoff. Cleaves host NLRP1, triggers host N-glycine-mediated degradation of the autoinhibitory NLRP1 N-terminal fragment. The protein is Genome polyprotein of Echovirus 6 (strain Charles).